Consider the following 25-residue polypeptide: MENVMSWFNIDFEIKSDNNIDKTLL.

This chain is SPbeta prophage-derived uncharacterized protein YotF (yotF), found in Bacillus subtilis (strain 168).